The chain runs to 218 residues: Small ribosomal subunit protein uS5 (218 aa).

The interval 1–49 is disordered; the sequence is MPGRQRRDGGSGPAGQNGPNTGDNRGGGDRRGGGRDDRRGGQSAEKSNH. A compositionally biased stretch (basic and acidic residues) spans 26–49; it reads GGGDRRGGGRDDRRGGQSAEKSNH. The region spanning 49 to 112 is the S5 DRBM domain; the sequence is HIERVVTINR…EEARKSFFRV (64 aa).

The protein belongs to the universal ribosomal protein uS5 family. As to quaternary structure, part of the 30S ribosomal subunit. Contacts proteins S4 and S8.

Functionally, with S4 and S12 plays an important role in translational accuracy. Its function is as follows. Located at the back of the 30S subunit body where it stabilizes the conformation of the head with respect to the body. The protein is Small ribosomal subunit protein uS5 of Rhodococcus jostii (strain RHA1).